The primary structure comprises 504 residues: Maturase K (504 aa).

The protein belongs to the intron maturase 2 family. MatK subfamily.

Its subcellular location is the plastid. The protein localises to the chloroplast. Functionally, usually encoded in the trnK tRNA gene intron. Probably assists in splicing its own and other chloroplast group II introns. This chain is Maturase K, found in Mentzelia laevicaulis (Blazing star).